Reading from the N-terminus, the 185-residue chain is Threonylcarbamoyl-AMP synthase (185 aa).

One can recognise a YrdC-like domain in the interval 7-185 (AAQRRAARAH…IDFASGRVLR (179 aa)).

Belongs to the SUA5 family. TsaC subfamily.

It is found in the cytoplasm. It carries out the reaction L-threonine + hydrogencarbonate + ATP = L-threonylcarbamoyladenylate + diphosphate + H2O. Its function is as follows. Required for the formation of a threonylcarbamoyl group on adenosine at position 37 (t(6)A37) in tRNAs that read codons beginning with adenine. Catalyzes the conversion of L-threonine, HCO(3)(-)/CO(2) and ATP to give threonylcarbamoyl-AMP (TC-AMP) as the acyladenylate intermediate, with the release of diphosphate. The polypeptide is Threonylcarbamoyl-AMP synthase (Laribacter hongkongensis (strain HLHK9)).